An 833-amino-acid polypeptide reads, in one-letter code: Leucine--tRNA ligase (833 aa).

The 'HIGH' region signature appears at proline 41–histidine 52. Positions lysine 610 to serine 614 match the 'KMSKS' region motif. Lysine 613 is a binding site for ATP.

Belongs to the class-I aminoacyl-tRNA synthetase family.

The protein localises to the cytoplasm. It catalyses the reaction tRNA(Leu) + L-leucine + ATP = L-leucyl-tRNA(Leu) + AMP + diphosphate. The chain is Leucine--tRNA ligase from Streptococcus equi subsp. equi (strain 4047).